The chain runs to 358 residues: Cytoplasmic tRNA 2-thiolation protein 1 (358 aa).

This sequence belongs to the TtcA family. CTU1/NCS6/ATPBD3 subfamily.

It localises to the cytoplasm. Its pathway is tRNA modification; 5-methoxycarbonylmethyl-2-thiouridine-tRNA biosynthesis. Functionally, plays a central role in 2-thiolation of mcm(5)S(2)U at tRNA wobble positions of tRNA(Lys), tRNA(Glu) and tRNA(Gln). Directly binds tRNAs and probably acts by catalyzing adenylation of tRNAs, an intermediate required for 2-thiolation. It is unclear whether it acts as a sulfurtransferase that transfers sulfur from thiocarboxylated URM1 onto the uridine of tRNAs at wobble position. Prior mcm(5) tRNA modification by the elongator complex is required for 2-thiolation. May also be involved in protein urmylation. The protein is Cytoplasmic tRNA 2-thiolation protein 1 of Candida glabrata (strain ATCC 2001 / BCRC 20586 / JCM 3761 / NBRC 0622 / NRRL Y-65 / CBS 138) (Yeast).